The sequence spans 199 residues: DnaJ homolog subfamily C member 5B (199 aa).

Residues Ser14 and Ser16 each carry the phosphoserine modification. The J domain occupies 19–84; it reads ALYEILGLHK…SKRNIYDKYG (66 aa).

Interacts with the chaperone complex consisting of HSC70 and SGTA. Palmitoylated.

It is found in the membrane. In Sus scrofa (Pig), this protein is DnaJ homolog subfamily C member 5B (DNAJC5B).